An 87-amino-acid chain; its full sequence is Potassium channel toxin TsTXK-beta/Cryptide TyPep-16 (87 aa).

Positions Met1 to Cys19 are cleaved as a signal peptide. Positions Gln53 to Asp87 constitute a BetaSPN-type CS-alpha/beta domain. Intrachain disulfides connect Cys56-Cys77, Cys63-Cys82, and Cys67-Cys84.

It belongs to the long chain scorpion toxin family. Class 1 subfamily. Expressed by the venom gland.

Its subcellular location is the secreted. Its function is as follows. Specifically blocks voltage-gated potassium channels Kv4.2/KCND2. When measured at the peak current, the blocking effect of this toxin is about 65% and shows an IC(50)=652 nM. However, when measured at a later moment of the depolarising test pulse (500 ms), a 100% block of the current is observed with an IC(50)=313 nM. This may indicate a preference of the toxin for binding the inactivated state of the channel. The inhibition is completely reversible. In vivo, intraplantar injection into rat paw induces overt nociception (licking and lifting behaviors) and decreases the mechanical nociceptive threshold (hyperalgesia). Furthermore, the hyperalgesia is prolonged when intrathecal injections are performed. Induces discomfort and anxiety in mice, as it moderately diminishes locomotion (but has no effect on rearing behavior). Does not cause hemolysis, mast cell degranulation, LDH release, and does not have antimicrobial activity. Does not cause edema and pain. Functionally, does not induce hemolytic activity, lactate dehydrogenase (LDH) release from mast cells, mast cell degranulation, and antimicrobial effects. In vivo, injection into mice causes moderate edema formation, but induces very weak or no change in nociceptive sensibility. It also reduces mice locomotion, suggesting an increase in anxiety, but causes no alteration in rearing (standing on hind limbs). This is Potassium channel toxin TsTXK-beta/Cryptide TyPep-16 from Tityus serrulatus (Brazilian scorpion).